A 147-amino-acid polypeptide reads, in one-letter code: Hemoglobin subunit delta (147 aa).

Position 2 is an N-acetylalanine; in variant Niigata (V2). In terms of domain architecture, Globin spans 3–147 (HLTPEEKTAV…VANALAHKYH (145 aa)). At S51 the chain carries Phosphoserine. Residues H64 and H93 each contribute to the heme b site.

Belongs to the globin family. Heterotetramer of two alpha chains and two delta chains in adult hemoglobin A2 (HbA2). HbA2 represents less than 3.5% of adult hemoglobin. As to expression, red blood cells.

In terms of biological role, involved in oxygen transport from the lung to the various peripheral tissues. In Homo sapiens (Human), this protein is Hemoglobin subunit delta (HBD).